Reading from the N-terminus, the 512-residue chain is GMP synthase [glutamine-hydrolyzing] (512 aa).

The Glutamine amidotransferase type-1 domain occupies 7–197 (TILILDFGGQ…LFEVCDCSAD (191 aa)). The active-site Nucleophile is C84. Residues H171 and E173 contribute to the active site. A GMPS ATP-PPase domain is found at 198 to 387 (WTMDSLIEQT…LGIPDEILYR (190 aa)). 225–231 (SGGVDSA) lines the ATP pocket.

As to quaternary structure, homodimer.

It catalyses the reaction XMP + L-glutamine + ATP + H2O = GMP + L-glutamate + AMP + diphosphate + 2 H(+). It participates in purine metabolism; GMP biosynthesis; GMP from XMP (L-Gln route): step 1/1. Functionally, catalyzes the synthesis of GMP from XMP. The protein is GMP synthase [glutamine-hydrolyzing] of Caldanaerobacter subterraneus subsp. tengcongensis (strain DSM 15242 / JCM 11007 / NBRC 100824 / MB4) (Thermoanaerobacter tengcongensis).